Here is a 409-residue protein sequence, read N- to C-terminus: Putative competence-damage inducible protein (409 aa).

Belongs to the CinA family.

The protein is Putative competence-damage inducible protein of Clostridium botulinum (strain ATCC 19397 / Type A).